A 360-amino-acid chain; its full sequence is Chorismate synthase (360 aa).

The disordered stretch occupies residues 36-60; sequence LSEDDIQPDLDRRKPGTSKYTTPRR. NADP(+) is bound at residue R48. Residues 125 to 127, 246 to 247, G286, 301 to 305, and R327 contribute to the FMN site; these read RSS, NA, and KPTSS.

This sequence belongs to the chorismate synthase family. In terms of assembly, homotetramer. FMNH2 serves as cofactor.

It catalyses the reaction 5-O-(1-carboxyvinyl)-3-phosphoshikimate = chorismate + phosphate. Its pathway is metabolic intermediate biosynthesis; chorismate biosynthesis; chorismate from D-erythrose 4-phosphate and phosphoenolpyruvate: step 7/7. Functionally, catalyzes the anti-1,4-elimination of the C-3 phosphate and the C-6 proR hydrogen from 5-enolpyruvylshikimate-3-phosphate (EPSP) to yield chorismate, which is the branch point compound that serves as the starting substrate for the three terminal pathways of aromatic amino acid biosynthesis. This reaction introduces a second double bond into the aromatic ring system. This Histophilus somni (strain 129Pt) (Haemophilus somnus) protein is Chorismate synthase.